The following is a 248-amino-acid chain: 14-3-3 protein homolog 2 (248 aa).

This sequence belongs to the 14-3-3 family.

The sequence is that of 14-3-3 protein homolog 2 from Echinococcus granulosus (Hydatid tapeworm).